The following is a 285-amino-acid chain: CBY1-interacting BAR domain-containing protein 1-B (285 aa).

The transit peptide at 1–48 (MSQTPEARTRDNQTRQIQESVNNVEKHFGELCQIFAGYVRKTARLRDK) directs the protein to the mitochondrion. The BAR-like stretch occupies residues 11-221 (DNQTRQIQES…DIDEEEDLEV (211 aa)). A coiled-coil region spans residues 142 to 184 (RQIISQAETELQRATMDAARISQQLEETIDNFEKQKIKDIKKL). The span at 241 to 261 (NSRSGSTSRAPSVISQPPGNR) shows a compositional bias: polar residues. A disordered region spans residues 241 to 285 (NSRSGSTSRAPSVISQPPGNRQKNRMEDDEDGEDDNDENSTEDEN). Positions 267–285 (EDDEDGEDDNDENSTEDEN) are enriched in acidic residues.

Belongs to the CIBAR family.

Its subcellular location is the cytoplasm. The protein localises to the cytoskeleton. It localises to the microtubule organizing center. It is found in the centrosome. The protein resides in the centriole. Its subcellular location is the cell projection. The protein localises to the cilium. It localises to the nucleus. It is found in the mitochondrion inner membrane. The protein resides in the flagellum. Functionally, plays a critical role in regulating mitochondrial ultrastructure and function by maintaining the integrity of mitochondrial morphology, particularly the organization of cristae. Plays a crucial role in ciliogenesis. Plays a key role in the correct positioning of the annulus, a septin-based ring structure in the sperm flagellum, serving both as a physical barrier and a membrane diffusion barrier that separates the midpiece (MP) from the principal piece (PP). This chain is CBY1-interacting BAR domain-containing protein 1-B, found in Xenopus laevis (African clawed frog).